The chain runs to 105 residues: Large ribosomal subunit protein P2 (105 aa).

Positions 84 to 105 are disordered; sequence AEAKKEEPEEEADDDMGFGLFD.

This sequence belongs to the eukaryotic ribosomal protein P1/P2 family. In terms of assembly, P1 and P2 exist as dimers at the large ribosomal subunit. Post-translationally, phosphorylated.

Its function is as follows. Plays an important role in the elongation step of protein synthesis. This chain is Large ribosomal subunit protein P2 (ARP-1), found in Leishmania donovani.